A 781-amino-acid polypeptide reads, in one-letter code: Protein argonaute (781 aa).

A PAZ domain is found at 110 to 194 (SMNELLTERR…RHNDYCNSVM (85 aa)). The Piwi domain occupies 436 to 760 (LVVIVIPGPK…LSKFCGEVLR (325 aa)).

Belongs to the argonaute family. Ago subfamily. As to quaternary structure, interacts with miR2. Highly specific binding to the mRNA m7G-cap. May be a component of the RNA-induced silencing complex (RISC), a sequence-specific, multicomponent nuclease that destroys or silences messenger RNAs homologous to the silencing trigger.

The protein localises to the cytoplasm. Plays an essential role in growth and, with Dicer, also involved in microRNA (miRNA)-mediated translational repression. The RNA interference pathway is implicated in antigenic variation having a role in regulation of variant-specific surface protein (VSP)-coding gene expression. Several VSP genes are transcribed but only transcripts encoding the VSP to be expressed accumulate. Antisense RNAs corresponding to the silenced VSP genes are detected. In Giardia intestinalis (Giardia lamblia), this protein is Protein argonaute.